A 443-amino-acid polypeptide reads, in one-letter code: Crinkler effector protein 161 (443 aa).

The signal sequence occupies residues 1-17 (MVKLSCVIVGVPGDPFQ). Residues 18 to 56 (VEIDEICELVAGLKDAIKKEKPDSIKCDADKLQLFKAAK) are LQLFLAK domain. A DWL domain region spans residues 57–126 (EDRTFSASGA…GMESPSISQI (70 aa)). The HVLVXXP motif signature appears at 127 to 133 (HVLVVLP). An effector domain region spans residues 134–439 (EDSESEGGTS…RSMPGYCCAN (306 aa)). 2 short sequence motifs (nuclear localization signal) span residues 161–170 (ADKKRKRYWH) and 384–393 (HQPLKRLKLS).

Belongs to the Crinkler effector family.

The protein resides in the secreted. The protein localises to the host nucleus. Secreted effector that exhibits strong cell death suppression activity and suppresses cell death induced by a variety of effectors including CRN63, Avh241 and Avr3a. Protects host plants from biotic and abiotic stresses such as salinity and drought by up-regulation of many defense-related genes, including ABC transporters, Cytochrome P450 monooxygenases and receptor-like kinases (RLKs). Also enhances resistance to Phytophtora pathogens. The sequence is that of Crinkler effector protein 161 from Phytophthora sojae (strain P6497) (Soybean stem and root rot agent).